We begin with the raw amino-acid sequence, 551 residues long: Cytochrome P450 monooxygenase abl5 (551 aa).

N24 is a glycosylation site (N-linked (GlcNAc...) asparagine). Residues V37–Y57 form a helical membrane-spanning segment. Residues N174, N218, N283, N307, and N441 are each glycosylated (N-linked (GlcNAc...) asparagine). Heme is bound at residue C495.

The protein belongs to the cytochrome P450 family. Heme serves as cofactor.

Its subcellular location is the membrane. Functionally, cytochrome P450 monooxygenase; part of the gene cluster that mediates the biosynthesis of abscisic acid (ABA), a phytohormone that acts antagonistically toward salicylic acid (SA), jasmonic acid (JA) and ethylene (ETH) signaling, to impede plant defense responses. The first step of the pathway catalyzes the reaction from farnesyl diphosphate to alpha-ionylideneethane performed by the alpha-ionylideneethane synthase abl3 via a three-step reaction mechanism involving 2 neutral intermediates, beta-farnesene and allofarnesene. The cytochrome P450 monooxygenase abl1 might then be involved in the conversion of alpha-ionylideneethane to alpha-ionylideneacetic acid. Alpha-ionylideneacetic acid is further converted to abscisic acid in 2 steps involving the cytochrome P450 monooxygenase abl2 and the short-chain dehydrogenase/reductase abl4, via the intermediates 1'-deoxy-ABA or 1',4'-trans-diol-ABA, depending on the order of action of these 2 enzymes. Abl2 is responsible for the hydroxylation of carbon atom C-1' and abl4 might be involved in the oxidation of the C-4' carbon atom. The cytochrome monooxygenase abl5 seems not essential for the biosynthesis of ABA and its function remains to be identified. In Leptosphaeria maculans (strain JN3 / isolate v23.1.3 / race Av1-4-5-6-7-8) (Blackleg fungus), this protein is Cytochrome P450 monooxygenase abl5.